Here is a 252-residue protein sequence, read N- to C-terminus: tRNA pseudouridine synthase A (252 aa).

The active-site Nucleophile is aspartate 52. A substrate-binding site is contributed by tyrosine 111.

The protein belongs to the tRNA pseudouridine synthase TruA family. As to quaternary structure, homodimer.

It carries out the reaction uridine(38/39/40) in tRNA = pseudouridine(38/39/40) in tRNA. Formation of pseudouridine at positions 38, 39 and 40 in the anticodon stem and loop of transfer RNAs. The protein is tRNA pseudouridine synthase A of Methylorubrum populi (strain ATCC BAA-705 / NCIMB 13946 / BJ001) (Methylobacterium populi).